Here is a 601-residue protein sequence, read N- to C-terminus: Glutathione-regulated potassium-efflux system protein KefB (601 aa).

A run of 13 helical transmembrane segments spans residues 4-24 (SDFL…VPLA), 29-49 (IGAV…GLGF), 55-75 (EILH…GLEL), 87-107 (IFGV…GLLM), 115-135 (AAVV…LQLM), 152-172 (VLLF…LLAG), 177-197 (HFDW…LIGG), 207-227 (FIAA…LVLG), 230-250 (LFMD…GVLL), 268-288 (GLLL…GVLY), 291-311 (LLWV…VLYL), 324-344 (MQFA…FSTA), and 356-376 (ALLL…MKLV). In terms of domain architecture, RCK N-terminal spans 400–519 (KPQVIVVGFG…AGVTQFSRET (120 aa)).

This sequence belongs to the monovalent cation:proton antiporter 2 (CPA2) transporter (TC 2.A.37) family. KefB subfamily. As to quaternary structure, interacts with the regulatory subunit KefG.

It is found in the cell inner membrane. Pore-forming subunit of a potassium efflux system that confers protection against electrophiles. Catalyzes K(+)/H(+) antiport. The chain is Glutathione-regulated potassium-efflux system protein KefB from Escherichia coli O139:H28 (strain E24377A / ETEC).